A 167-amino-acid chain; its full sequence is Transcription antitermination protein NusB (167 aa).

Residues 1 to 21 (MIPTDTAPPSKPAQGHKGYKN) form a disordered region.

The protein belongs to the NusB family.

Functionally, involved in transcription antitermination. Required for transcription of ribosomal RNA (rRNA) genes. Binds specifically to the boxA antiterminator sequence of the ribosomal RNA (rrn) operons. This is Transcription antitermination protein NusB from Nitrosomonas eutropha (strain DSM 101675 / C91 / Nm57).